We begin with the raw amino-acid sequence, 138 residues long: Succinate dehydrogenase assembly factor 4, mitochondrial (138 aa).

Residues 1-32 (MLCAIKSTGYRYPRTGALNLLRGRPFNMATRK) constitute a mitochondrion transit peptide. Over residues 71-98 (QATGDRTKESLNSPLLTKNDIGSFSPEF) the composition is skewed to polar residues. Residues 71 to 138 (QATGDRTKES…YSFNGRVTDF (68 aa)) form a disordered region.

The protein belongs to the SDHAF4 family. Interacts with SDH1 in its FAD-bound form.

The protein resides in the mitochondrion matrix. In terms of biological role, plays an essential role in the assembly of succinate dehydrogenase (SDH), an enzyme complex (also referred to as respiratory complex II) that is a component of both the tricarboxylic acid (TCA) cycle and the mitochondrial electron transport chain, and which couples the oxidation of succinate to fumarate with the reduction of ubiquinone (coenzyme Q) to ubiquinol. Binds to the flavoprotein subunit SDH1 in its FAD-bound form, blocking the generation of excess reactive oxygen species (ROS) and facilitating its assembly with the iron-sulfur protein subunit SDH2 into the SDH catalytic dimer. This Saccharomyces cerevisiae (strain ATCC 204508 / S288c) (Baker's yeast) protein is Succinate dehydrogenase assembly factor 4, mitochondrial.